The primary structure comprises 464 residues: Arginine biosynthesis bifunctional protein ArgJ, mitochondrial (464 aa).

The substrate site is built by T191, K220, T231, E318, N459, and T464. The Nucleophile role is filled by T231.

It belongs to the ArgJ family. Heterodimer of an alpha and a beta chain. The alpha and beta chains are autoproteolytically processed from a single precursor protein within the mitochondrion.

It is found in the mitochondrion matrix. The catalysed reaction is N(2)-acetyl-L-ornithine + L-glutamate = N-acetyl-L-glutamate + L-ornithine. The enzyme catalyses L-glutamate + acetyl-CoA = N-acetyl-L-glutamate + CoA + H(+). The protein operates within amino-acid biosynthesis; L-arginine biosynthesis; L-ornithine and N-acetyl-L-glutamate from L-glutamate and N(2)-acetyl-L-ornithine (cyclic): step 1/1. It functions in the pathway amino-acid biosynthesis; L-arginine biosynthesis; N(2)-acetyl-L-ornithine from L-glutamate: step 1/4. Functionally, catalyzes two activities which are involved in the cyclic version of arginine biosynthesis: the synthesis of acetylglutamate from glutamate and acetyl-CoA, and of ornithine by transacetylation between acetylornithine and glutamate. This Pyricularia oryzae (strain 70-15 / ATCC MYA-4617 / FGSC 8958) (Rice blast fungus) protein is Arginine biosynthesis bifunctional protein ArgJ, mitochondrial.